The following is a 292-amino-acid chain: Protoheme IX farnesyltransferase (292 aa).

The next 9 helical transmembrane spans lie at 11 to 31, 37 to 57, 85 to 105, 108 to 128, 133 to 153, 163 to 183, 199 to 219, 223 to 243, and 261 to 281; these read FGIV…GFQI, WKIF…SLAL, AAAG…LFKL, VAGW…TLWW, VFAA…GYAV, SLYL…VLAI, VALG…VYVG, AAPM…PFVF, and WLAF…IPVI.

Belongs to the UbiA prenyltransferase family. Protoheme IX farnesyltransferase subfamily.

The protein resides in the cell inner membrane. It carries out the reaction heme b + (2E,6E)-farnesyl diphosphate + H2O = Fe(II)-heme o + diphosphate. It functions in the pathway porphyrin-containing compound metabolism; heme O biosynthesis; heme O from protoheme: step 1/1. Its function is as follows. Converts heme B (protoheme IX) to heme O by substitution of the vinyl group on carbon 2 of heme B porphyrin ring with a hydroxyethyl farnesyl side group. The chain is Protoheme IX farnesyltransferase from Bdellovibrio bacteriovorus (strain ATCC 15356 / DSM 50701 / NCIMB 9529 / HD100).